Here is a 238-residue protein sequence, read N- to C-terminus: Ribonuclease PH (238 aa).

Phosphate is bound by residues R86 and 124-126; that span reads GTR.

This sequence belongs to the RNase PH family. As to quaternary structure, homohexameric ring arranged as a trimer of dimers.

It catalyses the reaction tRNA(n+1) + phosphate = tRNA(n) + a ribonucleoside 5'-diphosphate. Phosphorolytic 3'-5' exoribonuclease that plays an important role in tRNA 3'-end maturation. Removes nucleotide residues following the 3'-CCA terminus of tRNAs; can also add nucleotides to the ends of RNA molecules by using nucleoside diphosphates as substrates, but this may not be physiologically important. Probably plays a role in initiation of 16S rRNA degradation (leading to ribosome degradation) during starvation. In Acinetobacter baumannii (strain AB307-0294), this protein is Ribonuclease PH.